The chain runs to 327 residues: Autoinducer 2 import system permease protein LsrD (327 aa).

9 helical membrane passes run 3-23, 41-61, 63-83, 86-106, 114-134, 158-178, 211-231, 257-277, and 283-303; these read LNWETTLLILLVLEILLFGAI, ICIGIVALPLTLVIISGGIDI, LGSTIGLCAIALGVMMQFGLP, LAVPLTLLLGLLCGLFNAALI, LVITLGTLYLYGGGALLLSGL, VLGLPIPLVLFAVITFFFWLI, ALYGLVGVASAIAALVMVSYF, IYGGSGSVIGTALAALLVGYL, and MVGIPNQVSSALSGALLVVVV.

It belongs to the binding-protein-dependent transport system permease family. AraH/RbsC subfamily. In terms of assembly, the complex is composed of two ATP-binding proteins (LsrA), two transmembrane proteins (LsrC and LsrD) and a solute-binding protein (LsrB).

It localises to the cell inner membrane. Functionally, part of the ABC transporter complex LsrABCD involved in autoinducer 2 (AI-2) import. Probably responsible for the translocation of the substrate across the membrane. This is Autoinducer 2 import system permease protein LsrD (lsrD) from Enterobacter sp. (strain 638).